We begin with the raw amino-acid sequence, 103 residues long: Seminal ribonuclease (103 aa).

Disulfide bonds link cysteine 12–cysteine 70, cysteine 26–cysteine 81, cysteine 44–cysteine 96, and cysteine 51–cysteine 58. Substrate-binding positions include 27 to 31, lysine 52, and arginine 71; that span reads KLVNT.

The protein belongs to the pancreatic ribonuclease family. As to quaternary structure, homodimer; disulfide-linked.

Its subcellular location is the secreted. The enzyme catalyses an [RNA] containing cytidine + H2O = an [RNA]-3'-cytidine-3'-phosphate + a 5'-hydroxy-ribonucleotide-3'-[RNA].. It carries out the reaction an [RNA] containing uridine + H2O = an [RNA]-3'-uridine-3'-phosphate + a 5'-hydroxy-ribonucleotide-3'-[RNA].. In terms of biological role, this enzyme hydrolyzes both single- and double-stranded RNA. The chain is Seminal ribonuclease (SRN) from Cephalophus silvicultor (Yellow-backed duiker).